Here is an 83-residue protein sequence, read N- to C-terminus: Sec-independent protein translocase protein TatA (83 aa).

The helical transmembrane segment at 1 to 21 threads the bilayer; sequence MGSFSIWHWLIVLLIVVMVFG. A disordered region spans residues 44–83; that stretch reads KDGGQSAAATDDKPAAPAGQVTNAQASDKTTIDVEARQKS. Over residues 63-72 the composition is skewed to polar residues; that stretch reads QVTNAQASDK. Positions 73 to 83 are enriched in basic and acidic residues; it reads TTIDVEARQKS.

This sequence belongs to the TatA/E family. In terms of assembly, the Tat system comprises two distinct complexes: a TatABC complex, containing multiple copies of TatA, TatB and TatC subunits, and a separate TatA complex, containing only TatA subunits. Substrates initially bind to the TatABC complex, which probably triggers association of the separate TatA complex to form the active translocon.

It localises to the cell inner membrane. Functionally, part of the twin-arginine translocation (Tat) system that transports large folded proteins containing a characteristic twin-arginine motif in their signal peptide across membranes. TatA could form the protein-conducting channel of the Tat system. The chain is Sec-independent protein translocase protein TatA from Polaromonas sp. (strain JS666 / ATCC BAA-500).